Reading from the N-terminus, the 1299-residue chain is DNA-directed RNA polymerase subunit beta' (1299 aa).

Zn(2+) is bound by residues C60, C62, C75, and C78. D535, D537, and D539 together coordinate Mg(2+). Residues C877, C954, C961, and C964 each coordinate Zn(2+).

The protein belongs to the RNA polymerase beta' chain family. As to quaternary structure, the RNAP catalytic core consists of 2 alpha, 1 beta, 1 beta' and 1 omega subunit. When a sigma factor is associated with the core the holoenzyme is formed, which can initiate transcription. Mg(2+) is required as a cofactor. It depends on Zn(2+) as a cofactor.

It catalyses the reaction RNA(n) + a ribonucleoside 5'-triphosphate = RNA(n+1) + diphosphate. Functionally, DNA-dependent RNA polymerase catalyzes the transcription of DNA into RNA using the four ribonucleoside triphosphates as substrates. This chain is DNA-directed RNA polymerase subunit beta', found in Renibacterium salmoninarum (strain ATCC 33209 / DSM 20767 / JCM 11484 / NBRC 15589 / NCIMB 2235).